The following is a 245-amino-acid chain: MSVSDGAATGSVRYSRVLLKVSGEAFVGEKRFGFDPAVVLRLSRDLKNVKESGVELCIVVGGGNIFRGASTSDGFERTSNDYVGMLATVINALALQNALEEMGVECRVLSAMPMTAVCETYVRRRAVRHLEKGRVVICAAGIGSPFFTTDTAAALRGIEMRCDAIFKGTQVDGVYSSDPKKDGSAVRYDRISYHDLLSSNLKIMDAAAISLARENSVPIIVFDLGRDGAFFEAVHGRGLFTTISD.

Lys-20–Gly-23 contacts ATP. Residue Gly-62 coordinates UMP. Residues Gly-63 and Arg-67 each contribute to the ATP site. Residues Asp-81 and Ile-142–Thr-149 each bind UMP. ATP-binding residues include Thr-169, Gln-170, Tyr-175, and Asp-178.

The protein belongs to the UMP kinase family. As to quaternary structure, homohexamer.

It is found in the cytoplasm. The enzyme catalyses UMP + ATP = UDP + ADP. Its pathway is pyrimidine metabolism; CTP biosynthesis via de novo pathway; UDP from UMP (UMPK route): step 1/1. With respect to regulation, inhibited by UTP. Its function is as follows. Catalyzes the reversible phosphorylation of UMP to UDP. The sequence is that of Uridylate kinase from Anaplasma marginale (strain St. Maries).